Here is a 91-residue protein sequence, read N- to C-terminus: Elongation factor 1-beta (91 aa).

Belongs to the EF-1-beta/EF-1-delta family.

Functionally, promotes the exchange of GDP for GTP in EF-1-alpha/GDP, thus allowing the regeneration of EF-1-alpha/GTP that could then be used to form the ternary complex EF-1-alpha/GTP/AAtRNA. The polypeptide is Elongation factor 1-beta (Thermococcus onnurineus (strain NA1)).